A 364-amino-acid chain; its full sequence is F-box/LRR-repeat protein At1g55660 (364 aa).

The region spanning 52-98 is the F-box domain; that stretch reads MDKISQLPDELLVKVLSFLSTKDAVSTSILSMRWKSLWMWLPKLEYN. LRR repeat units lie at residues 158-179, 185-206, 207-228, 233-254, 256-277, and 279-300; these read NVRELSLKLFNFAELPTKLPKS, SIVILKLKDEILVDVPRKVCLP, SLKTLFLGRVTYSDANSLHRLL, VLEDLVMERDKIDNLGKLSVIV, SLQRLTLKMSRPCHLDGLKMNS, and SLKYLKVIDERLESDSDDESDS.

The sequence is that of F-box/LRR-repeat protein At1g55660 from Arabidopsis thaliana (Mouse-ear cress).